The primary structure comprises 228 residues: Small ribosomal subunit protein uS3 (228 aa).

Residues V39 to R107 enclose the KH type-2 domain.

This sequence belongs to the universal ribosomal protein uS3 family. In terms of assembly, part of the 30S ribosomal subunit. Forms a tight complex with proteins S10 and S14.

In terms of biological role, binds the lower part of the 30S subunit head. Binds mRNA in the 70S ribosome, positioning it for translation. The protein is Small ribosomal subunit protein uS3 of Pseudomonas syringae pv. syringae (strain B728a).